The primary structure comprises 244 residues: Carboxy-S-adenosyl-L-methionine synthase (244 aa).

S-adenosyl-L-methionine-binding positions include Tyr-40, 65–67 (GCS), 90–91 (DN), 119–120 (DL), Asn-134, and Arg-201.

The protein belongs to the class I-like SAM-binding methyltransferase superfamily. Cx-SAM synthase family. As to quaternary structure, homodimer.

The enzyme catalyses prephenate + S-adenosyl-L-methionine = carboxy-S-adenosyl-L-methionine + 3-phenylpyruvate + H2O. Functionally, catalyzes the conversion of S-adenosyl-L-methionine (SAM) to carboxy-S-adenosyl-L-methionine (Cx-SAM). This chain is Carboxy-S-adenosyl-L-methionine synthase, found in Trichlorobacter lovleyi (strain ATCC BAA-1151 / DSM 17278 / SZ) (Geobacter lovleyi).